A 452-amino-acid chain; its full sequence is MSLPIVAIIGRPNVGKSTFVNRLAGNQQAIVHDQPGITRDRTYRPAFWRDRDFQVVDTGGLVFNDDSEFLPEIREQANLALAEAKAAIFVVDGQQGPTASDEEIAQWLRQQSVPVILAVNKCESPDQGAIQAAEFWHLGLGEPYPMSAIHGSGTGDLLDALLEYLPAPQEEPEEDEIKVAIVGRPNVGKSSLLNALTGEQRAIVSPISGTTRDAIDMVVERNGQKYRLIDTAGIRRKKNVDYGAEFFGINRAFKAIRRADVVLFVLDVLDGVTEQDLKLAGRIIEDGRAVVLVINKWDAVEKDSYTIYEHREQLMARLYFMDWAEMIFVSAQTGLRVQKILDCVDIAAQEHRRRVTTAVINEVLEEAVSWHSPPTTRQGKQGKIYYGTQVSTQPPAIALFVNDPNRFNDNYRRYIEKQFRKQLGFFGSPIRLFWRGKKVREMEGSRNRATKV.

2 consecutive EngA-type G domains span residues 4–169 (PIVA…PAPQ) and 177–352 (IKVA…QEHR). GTP-binding positions include 10–17 (GRPNVGKS), 57–61 (DTGGL), 120–123 (NKCE), 183–190 (GRPNVGKS), 230–234 (DTAGI), and 295–298 (NKWD). The 87-residue stretch at 353–439 (RRVTTAVINE…IRLFWRGKKV (87 aa)) folds into the KH-like domain.

This sequence belongs to the TRAFAC class TrmE-Era-EngA-EngB-Septin-like GTPase superfamily. EngA (Der) GTPase family. As to quaternary structure, associates with the 50S ribosomal subunit.

Functionally, GTPase that plays an essential role in the late steps of ribosome biogenesis. This Synechocystis sp. (strain ATCC 27184 / PCC 6803 / Kazusa) protein is GTPase Der.